A 349-amino-acid polypeptide reads, in one-letter code: UDP-3-O-acylglucosamine N-acyltransferase (349 aa).

Residue H246 is the Proton acceptor of the active site.

This sequence belongs to the transferase hexapeptide repeat family. LpxD subfamily. In terms of assembly, homotrimer.

The enzyme catalyses a UDP-3-O-[(3R)-3-hydroxyacyl]-alpha-D-glucosamine + a (3R)-hydroxyacyl-[ACP] = a UDP-2-N,3-O-bis[(3R)-3-hydroxyacyl]-alpha-D-glucosamine + holo-[ACP] + H(+). Its pathway is bacterial outer membrane biogenesis; LPS lipid A biosynthesis. Catalyzes the N-acylation of UDP-3-O-acylglucosamine using 3-hydroxyacyl-ACP as the acyl donor. Is involved in the biosynthesis of lipid A, a phosphorylated glycolipid that anchors the lipopolysaccharide to the outer membrane of the cell. This is UDP-3-O-acylglucosamine N-acyltransferase from Protochlamydia amoebophila (strain UWE25).